The chain runs to 1368 residues: DNA-directed RNA polymerase subunit beta (1368 aa).

It belongs to the RNA polymerase beta chain family. In terms of assembly, the RNAP catalytic core consists of 2 alpha, 1 beta, 1 beta' and 1 omega subunit. When a sigma factor is associated with the core the holoenzyme is formed, which can initiate transcription.

The catalysed reaction is RNA(n) + a ribonucleoside 5'-triphosphate = RNA(n+1) + diphosphate. Functionally, DNA-dependent RNA polymerase catalyzes the transcription of DNA into RNA using the four ribonucleoside triphosphates as substrates. In Paraburkholderia phymatum (strain DSM 17167 / CIP 108236 / LMG 21445 / STM815) (Burkholderia phymatum), this protein is DNA-directed RNA polymerase subunit beta.